Consider the following 157-residue polypeptide: Ribosome maturation factor RimP (157 aa).

This sequence belongs to the RimP family.

It is found in the cytoplasm. Required for maturation of 30S ribosomal subunits. The protein is Ribosome maturation factor RimP of Ligilactobacillus salivarius (strain UCC118) (Lactobacillus salivarius).